The primary structure comprises 784 residues: Cation/H(+) antiporter 26 (784 aa).

11 helical membrane passes run 38–58 (PLLLLLISLVSSLSSVFQALL), 61–81 (LANVDFVTQILAGIFLGPSAL), 97–117 (YFIIESFEAISFMFISYISTA), 130–150 (LAIINGLSLFLFPYVVGAIAC), 201–221 (LALSSIMVANCFGWGFFLLLI), 240–260 (FTKVLLLVGIVVVCRPIFNWI), 286–306 (TFLSETVGFPYVVGSVALGLV), 321–341 (IGSFCYAVLMPCYVIGIGNKV), 351–371 (IISLEFLIFTISAAKFASIVL), 376–396 (FQVPISHAVIVGFIVCIQGIY), and 413–433 (EAFGIMVISAMVHSTIFTAIV).

This sequence belongs to the monovalent cation:proton antiporter 2 (CPA2) transporter (TC 2.A.37) family. CHX (TC 2.A.37.4) subfamily. Expressed in pollen.

The protein localises to the membrane. May operate as a cation/H(+) antiporter. The polypeptide is Cation/H(+) antiporter 26 (CHX26) (Arabidopsis thaliana (Mouse-ear cress)).